Reading from the N-terminus, the 153-residue chain is Small heat shock protein HspB (153 aa).

The 111-residue stretch at Ala-30–Ser-140 folds into the sHSP domain.

It belongs to the small heat shock protein (HSP20) family.

In Bradyrhizobium diazoefficiens (strain JCM 10833 / BCRC 13528 / IAM 13628 / NBRC 14792 / USDA 110), this protein is Small heat shock protein HspB (hspB).